Consider the following 377-residue polypeptide: Dehydrogenase/reductase SDR family member 13 (377 aa).

The N-terminal stretch at 1–25 (MEALLLGVGLLLGAYVLVYYNLVKA) is a signal peptide. The NAD(+) site is built by serine 46 and isoleucine 48. Serine 170 contributes to the substrate binding site. NAD(+) is bound by residues tyrosine 197, lysine 201, and serine 232. The active-site Proton acceptor is the tyrosine 197. The interval 310–363 (LAGLGPGEDAESDEDSQPEDPGTPSSPSSPHPEEPTVSELYPSPQSSTDRSTVT) is disordered. Over residues 317-327 (EDAESDEDSQP) the composition is skewed to acidic residues. Over residues 328–337 (EDPGTPSSPS) the composition is skewed to low complexity. The segment covering 352-363 (SPQSSTDRSTVT) has biased composition (polar residues).

This sequence belongs to the short-chain dehydrogenases/reductases (SDR) family.

It is found in the secreted. Its function is as follows. Putative oxidoreductase. The polypeptide is Dehydrogenase/reductase SDR family member 13 (DHRS13) (Bos taurus (Bovine)).